Reading from the N-terminus, the 467-residue chain is Protein PHOSPHATE STARVATION RESPONSE 3 (467 aa).

The segment at 227–266 is disordered; it reads MSLPVSSCSDQEDLQDARSPAKVQLSSSRSSSGTASCNKP. One can recognise an HTH myb-type domain in the interval 262 to 322; it reads SCNKPRLRWT…HLQKYRLAKY (61 aa). The segment at residues 293–318 is a DNA-binding region (H-T-H motif); sequence PKGVLKLMKVEGLTIYHIKSHLQKYR. The segment covering 327 to 337 has biased composition (basic and acidic residues); the sequence is KEDKKQEEKKT. Disordered stretches follow at residues 327–353 and 400–467; these read KEDKKQEEKKTKSVANGNDHAKKKSAQ and RESI…VHDE. A compositionally biased stretch (polar residues) spans 402-412; the sequence is SISSMTSTTEG. 2 stretches are compositionally biased toward basic and acidic residues: residues 419–428 and 438–467; these read PMEKTEDKAE and RITDTDAECHSKVDNKKTKPQADLEMVHDE.

As to expression, expressed in the root cap and in the exodermis of the root, in the root tip of lateral roots, in the mesophyll cells of the leaf, in pollen, vascular cylinder of the anther and the veins of the lemma, palea and pistils, and in the xylem and phloem regions of large vascular bundles, small vascular bundles and diffuse vascular bundles in node I.

It localises to the nucleus. Functionally, transcription factor involved in phosphate starvation signaling. Binds to P1BS, an imperfect palindromic sequence 5'-GNATATNC-3', to promote the expression of inorganic phosphate (Pi) starvation-responsive genes. Functionally redundant with PHR1 and PHR2 in regulating Pi starvation response and Pi homeostasis. The sequence is that of Protein PHOSPHATE STARVATION RESPONSE 3 from Oryza sativa subsp. japonica (Rice).